The sequence spans 366 residues: MDKEYVGFAALPNQLHRKSVKKGFDFTLMVAGESGLGKSTLINSLFLTNLYEDRQVPDASARTTQTLTIERRGVEIEEGGIKVKLTLVDTPGFGDSVDCSDCWLPVVRFIEEQFEQYLRDESGLNRKNIQDSRVHCCLYFISPFGRGLRPLDVAFLRAVHEKVNIIPVIGKADALLPRETQVLKQKIRDQLKEEEINIYQFPECDSDEDEEFKKQNEEMKENIPFAVVGSSEVVREGTRPVRGRRYSWGTVEVENPHHCDFLNLRRMLVQTHLQDLKEVTHDLLYEGYRARCLQSLARPGARDRASRSKLSRQSATEIPLPMLPLADTEKLIREKDEELRRMQEMLEKMQAQMQQSQAQGEQSDVL.

The Septin-type G domain maps to 22–295 (KGFDFTLMVA…EGYRARCLQS (274 aa)). The interval 32-39 (GESGLGKS) is G1 motif. Residues 32–39 (GESGLGKS), Thr-66, Gly-92, and 171–179 (KADALLPRE) each bind GTP. The tract at residues 89 to 92 (DTPG) is G3 motif. Residues 170–173 (GKAD) form a G4 motif region. Ser-206 carries the phosphoserine modification. Residues Gly-229 and Arg-244 each coordinate GTP. Ser-247 is modified (phosphoserine; by AURKB). Position 250 is a phosphothreonine (Thr-250). Residues Ser-306 and Ser-314 each carry the phosphoserine; by AURKB modification. Residues 347–366 (EKMQAQMQQSQAQGEQSDVL) are disordered. Over residues 349–366 (MQAQMQQSQAQGEQSDVL) the composition is skewed to low complexity.

The protein belongs to the TRAFAC class TrmE-Era-EngA-EngB-Septin-like GTPase superfamily. Septin GTPase family. Septins polymerize into heterooligomeric protein complexes that form filaments, and can associate with cellular membranes, actin filaments and microtubules. GTPase activity is required for filament formation. Interacts with AURKB.

The protein localises to the cytoplasm. Its subcellular location is the cytoskeleton. It is found in the microtubule organizing center. It localises to the centrosome. The protein resides in the midbody. Functionally, filament-forming cytoskeletal GTPase. May play a role in cytokinesis (Potential). The sequence is that of Septin-1 from Rattus norvegicus (Rat).